We begin with the raw amino-acid sequence, 865 residues long: Anaphase-promoting complex subunit 6 (865 aa).

3 TPR repeats span residues 11–42 (IEKQ…LNLV), 46–75 (SKEY…LIQK), and 88–149 (EDYQ…LQIL). The segment at 153–293 (NDSSENMDDE…NNNNNNNNNF (141 aa)) is disordered. Acidic residues predominate over residues 183-202 (NCDDDDDDDDDDDDDDDDEK). Positions 249-292 (NKNNNKNNNNNNNNNNNNNNNNNNNNNNNNNNNNNNNNNNNNNN) are enriched in low complexity. 9 TPR repeats span residues 300-331 (IRSS…ALLT), 336-359 (FEAF…LLEK), 366-438 (DSWI…DIST), 478-506 (DIQT…ILKQ), 515-542 (CLMV…LVDS), 573-602 (AISW…STTL), 607-635 (GASW…TSSR), 642-670 (LPLL…AKDI), and 675-709 (PMIF…KIKS). The segment covering 403–434 (SNNNTFGANNNNNNNNNNNNNNNNNNNNNSNN) has biased composition (low complexity). The disordered stretch occupies residues 403 to 436 (SNNNTFGANNNNNNNNNNNNNNNNNNNNNSNNDI). A disordered region spans residues 738–767 (GIGNNNNNNNNRRTTTTTTTTSNNQKKNSS). TPR repeat units follow at residues 777 to 809 (ESWE…SLSL) and 814 to 843 (PSTY…SLSI).

This sequence belongs to the APC6/CDC16 family. As to quaternary structure, the APC/C is composed of at least 13 subunits that stay tightly associated throughout the cell cycle: anapc1, anapc2, anapc3, anapc4, anapc5, anapc6, anapc7, anapc8, anapc10, anapc11, cdc20, cdc26 and cdh1.

It is found in the nucleus. The protein operates within protein modification; protein ubiquitination. Component of the anaphase promoting complex/cyclosome (APC/C), a cell cycle-regulated E3 ubiquitin-protein ligase complex that controls progression through mitosis and the G1 phase of the cell cycle. The chain is Anaphase-promoting complex subunit 6 (anapc6) from Dictyostelium discoideum (Social amoeba).